Consider the following 468-residue polypeptide: Phenylalanine--tRNA ligase alpha subunit (468 aa).

Residues threonine 311, 350 to 352, and phenylalanine 390 contribute to the L-phenylalanine site; that span reads QLD. Glutamate 392 serves as a coordination point for Mg(2+).

The protein belongs to the class-II aminoacyl-tRNA synthetase family. Phe-tRNA synthetase alpha subunit type 2 subfamily. As to quaternary structure, tetramer of two alpha and two beta subunits. Mg(2+) is required as a cofactor.

The protein localises to the cytoplasm. The catalysed reaction is tRNA(Phe) + L-phenylalanine + ATP = L-phenylalanyl-tRNA(Phe) + AMP + diphosphate + H(+). The protein is Phenylalanine--tRNA ligase alpha subunit of Saccharolobus solfataricus (strain ATCC 35092 / DSM 1617 / JCM 11322 / P2) (Sulfolobus solfataricus).